The sequence spans 190 residues: Xanthine phosphoribosyltransferase (190 aa).

2 residues coordinate xanthine: leucine 20 and asparagine 27. 5-phospho-alpha-D-ribose 1-diphosphate is bound at residue 128–132; sequence ANGNA. A xanthine-binding site is contributed by lysine 156.

Belongs to the purine/pyrimidine phosphoribosyltransferase family. Xpt subfamily. In terms of assembly, homodimer.

It localises to the cytoplasm. The catalysed reaction is XMP + diphosphate = xanthine + 5-phospho-alpha-D-ribose 1-diphosphate. It functions in the pathway purine metabolism; XMP biosynthesis via salvage pathway; XMP from xanthine: step 1/1. Functionally, converts the preformed base xanthine, a product of nucleic acid breakdown, to xanthosine 5'-monophosphate (XMP), so it can be reused for RNA or DNA synthesis. This chain is Xanthine phosphoribosyltransferase, found in Clostridium novyi (strain NT).